A 465-amino-acid chain; its full sequence is Argininosuccinate lyase (465 aa).

This sequence belongs to the lyase 1 family. Argininosuccinate lyase subfamily.

The protein resides in the cytoplasm. The catalysed reaction is 2-(N(omega)-L-arginino)succinate = fumarate + L-arginine. It participates in amino-acid biosynthesis; L-arginine biosynthesis; L-arginine from L-ornithine and carbamoyl phosphate: step 3/3. The sequence is that of Argininosuccinate lyase from Rhodopseudomonas palustris (strain BisB18).